The primary structure comprises 307 residues: Acyl transferase (307 aa).

Catalysis depends on charge relay system residues Ser-116, Asp-213, and His-243.

The protein belongs to the LuxD family.

Its pathway is lipid metabolism; fatty acid reduction for biolumincescence. Its function is as follows. Acyl transferase is part of the fatty acid reductase system required for aldehyde biosynthesis; it produces fatty acids for the luminescent reaction. This Aliivibrio fischeri (Vibrio fischeri) protein is Acyl transferase.